The following is a 288-amino-acid chain: Light-independent protochlorophyllide reductase iron-sulfur ATP-binding protein (288 aa).

ATP is bound by residues 10 to 15 and lysine 39; that span reads GIGKST. Residue serine 14 participates in Mg(2+) binding. [4Fe-4S] cluster is bound by residues cysteine 95 and cysteine 129. 180-181 contacts ATP; it reads NR.

Belongs to the NifH/BchL/ChlL family. In terms of assembly, homodimer. Protochlorophyllide reductase is composed of three subunits; ChlL, ChlN and ChlB. The cofactor is [4Fe-4S] cluster.

The protein localises to the plastid. The protein resides in the chloroplast. The catalysed reaction is chlorophyllide a + oxidized 2[4Fe-4S]-[ferredoxin] + 2 ADP + 2 phosphate = protochlorophyllide a + reduced 2[4Fe-4S]-[ferredoxin] + 2 ATP + 2 H2O. It participates in porphyrin-containing compound metabolism; chlorophyll biosynthesis (light-independent). Component of the dark-operative protochlorophyllide reductase (DPOR) that uses Mg-ATP and reduced ferredoxin to reduce ring D of protochlorophyllide (Pchlide) to form chlorophyllide a (Chlide). This reaction is light-independent. The L component serves as a unique electron donor to the NB-component of the complex, and binds Mg-ATP. The chain is Light-independent protochlorophyllide reductase iron-sulfur ATP-binding protein from Chara vulgaris (Common stonewort).